Here is a 741-residue protein sequence, read N- to C-terminus: Exostosin-1b (741 aa).

Residues 1 to 7 (MQAKKRY) lie on the Cytoplasmic side of the membrane. Residues 8–28 (LISLLTGAFLVLLIYLGGGGV) form a helical; Signal-anchor for type II membrane protein membrane-spanning segment. The Lumenal portion of the chain corresponds to 29–741 (PGPAAPGSRS…RKKYREIERL (713 aa)). 2 N-linked (GlcNAc...) asparagine glycosylation sites follow: asparagine 84 and asparagine 325. Residues arginine 435, arginine 544, aspartate 560, glutamate 561, aspartate 562, glutamate 648, aspartate 649, and arginine 696 each contribute to the UDP-N-acetyl-alpha-D-glucosamine site. Aspartate 562 is a binding site for Mn(2+). A disulfide bridge links cysteine 647 with cysteine 699. Aspartate 649 is an active-site residue.

It belongs to the glycosyltransferase 47 family. It depends on Mn(2+) as a cofactor.

Its subcellular location is the endoplasmic reticulum membrane. The catalysed reaction is 3-O-{[(1-&gt;4)-beta-D-GlcA-(1-&gt;4)-alpha-D-GlcNAc](n)-(1-&gt;4)-beta-D-GlcA-(1-&gt;3)-beta-D-Gal-(1-&gt;3)-beta-D-Gal-(1-&gt;4)-beta-D-Xyl}-L-seryl-[protein] + UDP-N-acetyl-alpha-D-glucosamine = 3-O-{alpha-D-GlcNAc-[(1-&gt;4)-beta-D-GlcA-(1-&gt;4)-alpha-D-GlcNAc](n)-(1-&gt;4)-beta-D-GlcA-(1-&gt;3)-beta-D-Gal-(1-&gt;3)-beta-D-Gal-(1-&gt;4)-beta-D-Xyl}-L-seryl-[protein] + UDP + H(+). It catalyses the reaction 3-O-{alpha-D-GlcNAc-[(1-&gt;4)-beta-D-GlcA-(1-&gt;4)-alpha-D-GlcNAc](n)-(1-&gt;4)-beta-D-GlcA-(1-&gt;3)-beta-D-Gal-(1-&gt;3)-beta-D-Gal-(1-&gt;4)-beta-D-Xyl}-L-seryl-[protein] + UDP-alpha-D-glucuronate = 3-O-{[(1-&gt;4)-beta-D-GlcA-(1-&gt;4)-alpha-D-GlcNAc](n+1)-(1-&gt;4)-beta-D-GlcA-(1-&gt;3)-beta-D-Gal-(1-&gt;3)-beta-D-Gal-(1-&gt;4)-beta-D-Xyl}-L-seryl-[protein] + UDP + H(+). It functions in the pathway protein modification; protein glycosylation. Glycosyltransferase required for the biosynthesis of heparan-sulfate. This is Exostosin-1b (ext1b) from Danio rerio (Zebrafish).